The sequence spans 197 residues: Holliday junction branch migration complex subunit RuvA (197 aa).

Residues 1 to 64 are domain I; the sequence is MIGRLSGKLI…EDAHLLYGFA (64 aa). Positions 65–143 are domain II; the sequence is SKEERQTFRQ…TGGNLTVPGG (79 aa). Residues 143–147 are flexible linker; the sequence is GLPFA. Residues 148–197 form a domain III region; sequence ATPDEKSDIVNALLALGYNEKEAAAATKSLPADVTVSEGVRLALKSLMKV.

Belongs to the RuvA family. In terms of assembly, homotetramer. Forms an RuvA(8)-RuvB(12)-Holliday junction (HJ) complex. HJ DNA is sandwiched between 2 RuvA tetramers; dsDNA enters through RuvA and exits via RuvB. An RuvB hexamer assembles on each DNA strand where it exits the tetramer. Each RuvB hexamer is contacted by two RuvA subunits (via domain III) on 2 adjacent RuvB subunits; this complex drives branch migration. In the full resolvosome a probable DNA-RuvA(4)-RuvB(12)-RuvC(2) complex forms which resolves the HJ.

The protein resides in the cytoplasm. Its function is as follows. The RuvA-RuvB-RuvC complex processes Holliday junction (HJ) DNA during genetic recombination and DNA repair, while the RuvA-RuvB complex plays an important role in the rescue of blocked DNA replication forks via replication fork reversal (RFR). RuvA specifically binds to HJ cruciform DNA, conferring on it an open structure. The RuvB hexamer acts as an ATP-dependent pump, pulling dsDNA into and through the RuvAB complex. HJ branch migration allows RuvC to scan DNA until it finds its consensus sequence, where it cleaves and resolves the cruciform DNA. The sequence is that of Holliday junction branch migration complex subunit RuvA from Chromobacterium violaceum (strain ATCC 12472 / DSM 30191 / JCM 1249 / CCUG 213 / NBRC 12614 / NCIMB 9131 / NCTC 9757 / MK).